A 158-amino-acid chain; its full sequence is NADH-quinone oxidoreductase subunit B 2 (158 aa).

[4Fe-4S] cluster-binding residues include cysteine 37, cysteine 38, cysteine 102, and cysteine 132.

Belongs to the complex I 20 kDa subunit family. As to quaternary structure, NDH-1 is composed of 14 different subunits. Subunits NuoB, C, D, E, F, and G constitute the peripheral sector of the complex. The cofactor is [4Fe-4S] cluster.

The protein resides in the cell inner membrane. It catalyses the reaction a quinone + NADH + 5 H(+)(in) = a quinol + NAD(+) + 4 H(+)(out). NDH-1 shuttles electrons from NADH, via FMN and iron-sulfur (Fe-S) centers, to quinones in the respiratory chain. Couples the redox reaction to proton translocation (for every two electrons transferred, four hydrogen ions are translocated across the cytoplasmic membrane), and thus conserves the redox energy in a proton gradient. This chain is NADH-quinone oxidoreductase subunit B 2, found in Nitrosospira multiformis (strain ATCC 25196 / NCIMB 11849 / C 71).